The following is a 1001-amino-acid chain: UPF0182 protein Mjls_1469 (1001 aa).

7 helical membrane passes run 16-36 (VLIGVALAAVVLLLIGPRFID), 61-81 (VVVFLVVSLLIGAIVFAGLAL), 112-132 (LFGFGVPAFIGILSGIVAQSY), 174-194 (FVATFLAFIANLLGHYLFGGI), 209-229 (IQLVTLVGILILLKAFAYWLD), 258-278 (KLILLAIAVICAVAVFSAIVL), and 286-306 (IGVVLLLLSSLVVGAGWPLVV). Residues 900-929 (ATGPAPANLPDGQPAAQPPNGQQPAAQTPG) are compositionally biased toward low complexity. Residues 900 to 977 (ATGPAPANLP…MSGLQDAQRS (78 aa)) form a disordered region.

It belongs to the UPF0182 family.

It is found in the cell membrane. The sequence is that of UPF0182 protein Mjls_1469 from Mycobacterium sp. (strain JLS).